A 610-amino-acid chain; its full sequence is Elongation factor 4 (610 aa).

In terms of domain architecture, tr-type G spans 7–189 (SRIRNFSIIA…AIVQRIPPPK (183 aa)). GTP is bound by residues 19-24 (DHGKST) and 136-139 (NKID).

It belongs to the TRAFAC class translation factor GTPase superfamily. Classic translation factor GTPase family. LepA subfamily.

The protein localises to the cell inner membrane. The catalysed reaction is GTP + H2O = GDP + phosphate + H(+). Functionally, required for accurate and efficient protein synthesis under certain stress conditions. May act as a fidelity factor of the translation reaction, by catalyzing a one-codon backward translocation of tRNAs on improperly translocated ribosomes. Back-translocation proceeds from a post-translocation (POST) complex to a pre-translocation (PRE) complex, thus giving elongation factor G a second chance to translocate the tRNAs correctly. Binds to ribosomes in a GTP-dependent manner. The polypeptide is Elongation factor 4 (Thermus thermophilus (strain ATCC 27634 / DSM 579 / HB8)).